A 160-amino-acid chain; its full sequence is Large ribosomal subunit protein eL29 (160 aa).

The segment covering 1-26 has biased composition (basic residues); that stretch reads MAKSKNHTTHNQSRKWHRNGIKKPRS. 2 disordered regions span residues 1–34 and 115–160; these read MAKS…SLKG and RLCQ…VKAP. Position 5 is an N6-methyllysine (K5). S31 is subject to Phosphoserine. Position 33 is an N6-acetyllysine (K33). Residues 126–160 show a composition bias toward low complexity; the sequence is KAGAKAPAKAQASAPAQAPKGAQAPKGAQAPVKAP. 2 consecutive repeat copies span residues 127-134 and 135-142. Positions 127–142 are 2 X 8 AA tandem repeats of A-X-A-K-A-P-A-[KQ]; sequence AGAKAPAKAQASAPAQ. Phosphoserine is present on S138. An N6-acetyllysine modification is found at K145.

The protein belongs to the eukaryotic ribosomal protein eL29 family. Component of the large ribosomal subunit.

Its subcellular location is the cytoplasm. Its function is as follows. Component of the large ribosomal subunit. The ribosome is a large ribonucleoprotein complex responsible for the synthesis of proteins in the cell. The sequence is that of Large ribosomal subunit protein eL29 (Rpl29) from Mus musculus (Mouse).